A 303-amino-acid chain; its full sequence is MSFTVKVKEELLGHKSENKMELSAIIKMSGSLGLANHGLNLSITTENAKIARHIYSMLEEHYHLQPEIKYHQKTNLRKNRVYTVFIEEKVDVILADLKLADAFFGIETGIEHSILDNDENGRAYLRGAFLSTGTVREPDSGKYQLEIFSVYLDHAQDLANLMKKFMLDAKVIEHKHGAVTYLQKAEDIMDFLIVIDAMEARDAFEEIKMIRETRNDINRANNVETANIARTITASMKTINNIIKIMDTIGFDALPSDLRQVAQVRVAHPDYSIQQIADSLETPLSKSGVNHRLRKINKIADEL.

The H-T-H motif DNA-binding region spans 272-303 (SIQQIADSLETPLSKSGVNHRLRKINKIADEL).

This sequence belongs to the WhiA family.

Its function is as follows. Involved in cell division and chromosome segregation. In Streptococcus agalactiae serotype Ia (strain ATCC 27591 / A909 / CDC SS700), this protein is Probable cell division protein WhiA.